The following is a 1461-amino-acid chain: Potassium channel K2 (1461 aa).

Transmembrane regions (helical) follow at residues 44 to 64, 142 to 162, 183 to 203, 218 to 238, 242 to 262, and 281 to 301; these read IIEG…LIYI, FNYY…YISL, IYNM…MVII, LIDI…IFVF, IDIY…NVSY, and IVLG…TIQA. An intramembrane region (pore-forming) is located at residues 322–340; the sequence is YFYFSIISISTVGYGDIFP. A helical membrane pass occupies residues 349–369; sequence CIIFIFWTFIWVPIQFNDLII. A disordered region spans residues 771-794; sequence KRDDFDNNNNNNNNNIVKSRKKGR.

As to quaternary structure, may form oligomers or interact with other proteins.

Its subcellular location is the membrane. Functionally, contributes to transmembrane potassium transport. In Plasmodium falciparum (isolate 3D7), this protein is Potassium channel K2.